The chain runs to 598 residues: Eukaryotic translation initiation factor 3 subunit D (598 aa).

Residues 104–178 (VKTRGFGRGG…YDKPQRNRDS (75 aa)) are disordered. Positions 109–132 (FGRGGGTIFRGRGQRGGAQRGRGG) are enriched in gly residues. Positions 165 to 177 (GWKDYDKPQRNRD) are enriched in basic and acidic residues. Positions 304–318 (SIDLVTVNENAADAP) are RNA gate. A disordered region spans residues 574 to 598 (NTFEEEDDTGAKAEKDEESEEKDEE). Residues 589–598 (DEESEEKDEE) are compositionally biased toward acidic residues.

It belongs to the eIF-3 subunit D family. As to quaternary structure, component of the eukaryotic translation initiation factor 3 (eIF-3) complex.

Its subcellular location is the cytoplasm. In terms of biological role, mRNA cap-binding component of the eukaryotic translation initiation factor 3 (eIF-3) complex, which is involved in protein synthesis of a specialized repertoire of mRNAs and, together with other initiation factors, stimulates binding of mRNA and methionyl-tRNAi to the 40S ribosome. The eIF-3 complex specifically targets and initiates translation of a subset of mRNAs involved in cell proliferation. In the eIF-3 complex, eif3d specifically recognizes and binds the 7-methylguanosine cap of a subset of mRNAs. The chain is Eukaryotic translation initiation factor 3 subunit D from Coccidioides immitis (strain RS) (Valley fever fungus).